The sequence spans 326 residues: MSLTAAVKDELARVRVDKISSRKAEVSATLRFAGGLHIISGRIVIEAELDAAIAARRLRVAIAEVYGHVSDIIVVSGGALRKGNRYVVRVVRDGEALARQTGLLDSRGRPVRGLPPQVVSASIGDTVAAWRGAFLAHGSLTEPGRSSALEVTCPGPEAALALVGAARRLGITSKAREVRGVDRVVIRDGDAISAILTRMGAHDAVLAWEERRMRREVRGTANRLANFDDANLRRSARAAVAASARVERAFEILAEDVPDHLVEAGRLRLENKQASLEELGQLSDPPLTKDAVAGRIRRLLAMADKKASDLGIPDTESILTPEMLDL.

Positions Ser275–Ser308 form a DNA-binding region, H-T-H motif.

Belongs to the WhiA family.

In terms of biological role, involved in cell division and chromosome segregation. The chain is Probable cell division protein WhiA from Beutenbergia cavernae (strain ATCC BAA-8 / DSM 12333 / CCUG 43141 / JCM 11478 / NBRC 16432 / NCIMB 13614 / HKI 0122).